The primary structure comprises 294 residues: Putative inactive magnesium transporter MRS2-8 (294 aa).

The stretch at 179-216 forms a coiled coil; the sequence is KLKSSMTRLTAQVQKIKDELEQLLEDDEDMAELYLSRK.

It belongs to the CorA metal ion transporter (MIT) (TC 1.A.35.5) family.

The sequence is that of Putative inactive magnesium transporter MRS2-8 (MRS2-8) from Arabidopsis thaliana (Mouse-ear cress).